The following is a 386-amino-acid chain: MSEPTSSSSLDITSNCIIETPLQPSDFLPKSANLFPKFPERISVDSWELWEFDTFDTNGSVAFGCSLYRDARGVEQGGFHAEVNALWPDGTHWGETLYFAVSEVVENSDGTTGGKWLSKDGGSITFHIASDYTAAALDFNVPGKVSGTMELRNHANVSPTSNLPASDAEAQLCPGVYYTFPMGPVATSVTATFSSVGANGESRELFISSGYGGMVRGWSARPWPTFMNDAYYVVAQVGPYMLQILRTLGSVFVQHKPFAVARLYLDGSLVSAANTVVGDELTAHADDVKGDAVRLTKVQPDEKSQGLSGKFRDGNVGYVLEFAKKDSEHGWTFQISHKRAVWSEPTSAPGPDGTGKSGWIEAISGGAKGENYEGHGFGGQLQIPVP.

The segment at 1–223 (MSEPTSSSSL…MVRGWSARPW (223 aa)) is beta-sandwich motif. Substrate contacts are provided by glutamate 51, asparagine 84, and lysine 356. Residues 223–386 (WPTFMNDAYY…FGGQLQIPVP (164 aa)) form a beta-barrel motif region.

It belongs to the Diels-Alderase family.

The protein operates within secondary metabolite biosynthesis. With respect to regulation, 3-aminomethyl-p-menthane which is similar to the phomasetin substructure, dose-dependently inhibits phm7 activity in vitro and production of phomasetin in the fungus. Functionally, diels-Alderase; part of the gene cluster that mediates the biosynthesis of the trans-fused decalin-containing tetramic acid phomasetin, the stereochemical opposite of the HIV-1 integrase inhibitor equisetin. The PKS module of phm1 together with the enoylreductase phm4 catalyze the formation of the polyketide unit which is then conjugated to L-serine by the condensation domain of the phm1 NRPS module. Activity of the Dieckmann cyclase domain (RED) of phm1 results in release of the Dieckmann product intermediate. The Diels-Alderase phm7 then uses the Dieckmann product of phm1 as substrate and catalyzes the Diels-Alder cycloaddition to form the decalin ring of N-desmethylphomasetin. N-desmethylphomasetin is further methylated to phomasetin by the methyltransferase phm5. This chain is Diels-Alderase phm7, found in Pyrenochaetopsis sp.